The sequence spans 1192 residues: MQSSMWSFLQKKEGGEIEDIEKKISNAQELNKLKTSPKKKREAVVKEKVEKKEKKETKPKRKSSKKNKEEEEEEEQEEQDGEEEQEEEEEYQQQDEEIEEDINGEEEMELDENEKEKNKKKKQSLKTKENKESKSSSSSKKTIENKETKKPEKQSSKQSNNLKRLKRKKMDDDEEDEEDENKTDDNDLDDMLDDDSDNEKDSISSKDKEYKEKVLKDKEKKEKEKKEKELKEKESKEKEKKEKEKKEKEEKDKKEKELKEKELKEKELKDKKEKELKEKEKELKDKEKKEKELKEKEKKEKEEKEKEKKEKKEKELKEKEEKEKKEKELKEKELKEKELKEKELKEKELTSPKKETIDISDLFKRANAEAKSSVPTSTSKNSKTNKKQKVDHKPTATTKKPSPVLEAKQSTTTTTTTTTTSTATTISSKSISSPSKKEEKEVITSKKQVEATKVEVKKEKEKEKEKEKEDDEEEEEEEEDDDEKLEDIDEEEYEEEEEEDEEGISENEEEEEKKSTQIKSKFIKKVPISKKKGNAKTIQADLKVIGKYRPIEDAQWKKGEAVPYMVLAKTFEMMESTSSRLIIIEHLANLFRSIMLLSPKDLVMTIYLSINKIGPSYQSKELGIGEHVLIKSLAESTGRSVDVIKQELTEVGDLGIIAQNSRSTQTLMGKPTPLTIQSVFKTFQQIADLSGTGGQQKKKDLIKKLLVSCKDCETLYIIRSLQGKLRIGLAERSVLMALAKSVLVTPPIDGSGQQIFDIRKQMKQEEFEERYQNVVSKVTRAYSQLPNYDLFVPHLIAVNGIDNILSTCSLKVGIPVKPMLAQPTTGISQMLDRFSDMEFTCEFKYDGERAQIHRLPDGTTHIYTRNLEDYTQKYPDIVANVTKFVGPNVKSFILDCEAVAFDAATKKILSFQVLSTRARKSVQLSQIKVPVCVFAFDLLYLNGQSLIDEPLIKRREHLVENFIASDGVFAFAKYSNISDVNDIQSYLEEAVEGNCEGLMVKTLKEKSIYEPSRRSYNWLKIKKDYMQGMTDSLDLVPIGAWYGKGKRTGTYGAYLLACYDENNEEFQTLCKIGTGFSDEQLTTFTSQLKPHLINQPRNQFRFSDSIKPDVWFSPSCVWEVLAADLSISPVHTAASGILDPNKGIALRFPRFIRIRPDKSPEDATSSDQVVDMYQNQKINSQSSKINEKDEDY.

Disordered stretches follow at residues 29 to 257 (ELNK…KEKE) and 280 to 517 (EKEL…KSTQ). Residues 42–56 (EAVVKEKVEKKEKKE) show a composition bias toward basic and acidic residues. Acidic residues predominate over residues 70–113 (EEEEEEQEEQDGEEEQEEEEEYQQQDEEIEEDINGEEEMELDEN). The segment covering 141 to 155 (KTIENKETKKPEKQS) has biased composition (basic and acidic residues). Positions 172-198 (DDEEDEEDENKTDDNDLDDMLDDDSDN) are enriched in acidic residues. Composition is skewed to basic and acidic residues over residues 199–257 (EKDS…KEKE) and 280–368 (EKEL…RANA). Low complexity-rich tracts occupy residues 371–382 (KSSVPTSTSKNS) and 410–434 (STTT…ISSP). A compositionally biased stretch (basic and acidic residues) spans 435-467 (SKKEEKEVITSKKQVEATKVEVKKEKEKEKEKE). The span at 468-511 (KEDDEEEEEEEEDDDEKLEDIDEEEYEEEEEEDEEGISENEEEE) shows a compositional bias: acidic residues. The tract at residues 724-733 (KLRIGLAERS) is interaction with target DNA. Residue Glu-842 coordinates ATP. The N6-AMP-lysine intermediate role is filled by Lys-844. ATP is bound by residues Arg-849 and Arg-865. A Mg(2+)-binding site is contributed by Glu-897. Positions 918 to 920 (ARK) are interaction with target DNA. Residue Glu-996 participates in Mg(2+) binding. ATP is bound by residues Lys-1001, Arg-1014, and Lys-1020. Residues 1157–1192 (DKSPEDATSSDQVVDMYQNQKINSQSSKINEKDEDY) are disordered. Over residues 1162–1184 (DATSSDQVVDMYQNQKINSQSSK) the composition is skewed to polar residues.

This sequence belongs to the ATP-dependent DNA ligase family. Mg(2+) serves as cofactor.

It localises to the nucleus. It carries out the reaction ATP + (deoxyribonucleotide)n-3'-hydroxyl + 5'-phospho-(deoxyribonucleotide)m = (deoxyribonucleotide)n+m + AMP + diphosphate.. Its function is as follows. DNA ligase that seals nicks in double-stranded DNA during DNA replication, DNA recombination and DNA repair. This is DNA ligase 1 (lig1) from Dictyostelium discoideum (Social amoeba).